We begin with the raw amino-acid sequence, 511 residues long: Histidine ammonia-lyase (511 aa).

The 5-imidazolinone (Ala-Gly) cross-link spans 142-144 (ASG). 2,3-didehydroalanine (Ser) is present on S143.

This sequence belongs to the PAL/histidase family. Contains an active site 4-methylidene-imidazol-5-one (MIO), which is formed autocatalytically by cyclization and dehydration of residues Ala-Ser-Gly.

The protein resides in the cytoplasm. The enzyme catalyses L-histidine = trans-urocanate + NH4(+). It functions in the pathway amino-acid degradation; L-histidine degradation into L-glutamate; N-formimidoyl-L-glutamate from L-histidine: step 1/3. The polypeptide is Histidine ammonia-lyase (Caulobacter sp. (strain K31)).